The primary structure comprises 104 residues: Cell division topological specificity factor (104 aa).

It belongs to the MinE family.

Functionally, prevents the cell division inhibition by proteins MinC and MinD at internal division sites while permitting inhibition at polar sites. This ensures cell division at the proper site by restricting the formation of a division septum at the midpoint of the long axis of the cell. The chain is Cell division topological specificity factor from Sorangium cellulosum (strain So ce56) (Polyangium cellulosum (strain So ce56)).